The primary structure comprises 499 residues: Probable cytochrome P450 cyp-35D1 (499 aa).

Cysteine 444 is a heme binding site.

It belongs to the cytochrome P450 family. Requires heme as cofactor. In terms of tissue distribution, expressed in hypodermis, intestine and vulva upon thiabendazole (TBZ) exposure.

Its function is as follows. Cytochromes P450 are a group of heme-thiolate monooxygenases. They oxidize a variety of structurally unrelated compounds, including steroids, fatty acids, and xenobiotics. Involved in the oxidative metabolism of thiabendazole (TBZ). Catalyzes the conversion of TBZ to its hydroxylated form. This is Probable cytochrome P450 cyp-35D1 from Caenorhabditis elegans.